A 269-amino-acid chain; its full sequence is Phosphonates import ATP-binding protein PhnC 2 (269 aa).

The region spanning 2 to 246 (LRIDSLSKRY…VLNEIYGEED (245 aa)) is the ABC transporter domain. Residue 35–42 (GPSGAGKS) coordinates ATP. The segment at 246–269 (DWNASGPAQDSEENEAVSAGVATH) is disordered.

The protein belongs to the ABC transporter superfamily. Phosphonates importer (TC 3.A.1.9.1) family. The complex is composed of two ATP-binding proteins (PhnC), two transmembrane proteins (PhnE) and a solute-binding protein (PhnD).

It localises to the cell inner membrane. It catalyses the reaction phosphonate(out) + ATP + H2O = phosphonate(in) + ADP + phosphate + H(+). Part of the ABC transporter complex PhnCDE involved in phosphonates import. Responsible for energy coupling to the transport system. The polypeptide is Phosphonates import ATP-binding protein PhnC 2 (Synechococcus sp. (strain JA-2-3B'a(2-13)) (Cyanobacteria bacterium Yellowstone B-Prime)).